The chain runs to 146 residues: Ferric uptake regulation protein 2 (146 aa).

Zn(2+) contacts are provided by Cys96 and Cys99.

It belongs to the Fur family.

The protein resides in the cytoplasm. Its function is as follows. Acts as a global negative controlling element, employing Fe(2+) as a cofactor to bind the operator of the repressed genes. The chain is Ferric uptake regulation protein 2 (fur2) from Mycolicibacterium fortuitum (Mycobacterium fortuitum).